Consider the following 499-residue polypeptide: Ribulose bisphosphate carboxylase large chain (499 aa).

Substrate-binding residues include N139 and T189. Catalysis depends on K191, which acts as the Proton acceptor. K193 contributes to the substrate binding site. Mg(2+)-binding residues include K217, D219, and E220. K217 carries the N6-carboxylysine modification. H309 serves as the catalytic Proton acceptor. Substrate is bound by residues R310, H342, and S394.

The protein belongs to the RuBisCO large chain family. Type I subfamily. Heterohexadecamer of 8 large chains and 8 small chains. Mg(2+) serves as cofactor.

The catalysed reaction is 2 (2R)-3-phosphoglycerate + 2 H(+) = D-ribulose 1,5-bisphosphate + CO2 + H2O. It carries out the reaction D-ribulose 1,5-bisphosphate + O2 = 2-phosphoglycolate + (2R)-3-phosphoglycerate + 2 H(+). In terms of biological role, ruBisCO catalyzes two reactions: the carboxylation of D-ribulose 1,5-bisphosphate, the primary event in carbon dioxide fixation, as well as the oxidative fragmentation of the pentose substrate. Both reactions occur simultaneously and in competition at the same active site. In Paraburkholderia xenovorans (strain LB400), this protein is Ribulose bisphosphate carboxylase large chain.